A 268-amino-acid chain; its full sequence is Phosphatidylglycerol--prolipoprotein diacylglyceryl transferase (268 aa).

7 helical membrane passes run tryptophan 21 to alanine 41, phenylalanine 54 to leucine 74, glycine 93 to methionine 113, alanine 122 to phenylalanine 142, valine 173 to leucine 193, glycine 203 to isoleucine 223, and valine 236 to leucine 256. Arginine 137 is an a 1,2-diacyl-sn-glycero-3-phospho-(1'-sn-glycerol) binding site.

This sequence belongs to the Lgt family.

It is found in the cell membrane. It carries out the reaction L-cysteinyl-[prolipoprotein] + a 1,2-diacyl-sn-glycero-3-phospho-(1'-sn-glycerol) = an S-1,2-diacyl-sn-glyceryl-L-cysteinyl-[prolipoprotein] + sn-glycerol 1-phosphate + H(+). It functions in the pathway protein modification; lipoprotein biosynthesis (diacylglyceryl transfer). Its function is as follows. Catalyzes the transfer of the diacylglyceryl group from phosphatidylglycerol to the sulfhydryl group of the N-terminal cysteine of a prolipoprotein, the first step in the formation of mature lipoproteins. The protein is Phosphatidylglycerol--prolipoprotein diacylglyceryl transferase of Symbiobacterium thermophilum (strain DSM 24528 / JCM 14929 / IAM 14863 / T).